A 160-amino-acid polypeptide reads, in one-letter code: Cytochrome b6-f complex subunit 4 (160 aa).

Helical transmembrane passes span 36–56 (LLYI…GLAV), 95–115 (LLGV…PFLE), and 131–151 (TVFL…TLPI).

Belongs to the cytochrome b family. PetD subfamily. In terms of assembly, the 4 large subunits of the cytochrome b6-f complex are cytochrome b6, subunit IV (17 kDa polypeptide, petD), cytochrome f and the Rieske protein, while the 4 small subunits are petG, petL, petM and petN. The complex functions as a dimer.

The protein resides in the plastid. It localises to the chloroplast thylakoid membrane. Functionally, component of the cytochrome b6-f complex, which mediates electron transfer between photosystem II (PSII) and photosystem I (PSI), cyclic electron flow around PSI, and state transitions. The polypeptide is Cytochrome b6-f complex subunit 4 (Coffea arabica (Arabian coffee)).